The following is a 323-amino-acid chain: tRNA U34 carboxymethyltransferase (323 aa).

Carboxy-S-adenosyl-L-methionine contacts are provided by residues Lys-91, Trp-105, Lys-110, Gly-130, 152–154, 181–182, Met-196, Tyr-200, and Arg-315; these read DPS and IE.

It belongs to the class I-like SAM-binding methyltransferase superfamily. CmoB family. Homotetramer.

It carries out the reaction carboxy-S-adenosyl-L-methionine + 5-hydroxyuridine(34) in tRNA = 5-carboxymethoxyuridine(34) in tRNA + S-adenosyl-L-homocysteine + H(+). In terms of biological role, catalyzes carboxymethyl transfer from carboxy-S-adenosyl-L-methionine (Cx-SAM) to 5-hydroxyuridine (ho5U) to form 5-carboxymethoxyuridine (cmo5U) at position 34 in tRNAs. The protein is tRNA U34 carboxymethyltransferase of Vibrio atlanticus (strain LGP32) (Vibrio splendidus (strain Mel32)).